The sequence spans 640 residues: Threonine--tRNA ligase (640 aa).

The TGS domain maps to 1 to 61 (MPVITLPDGS…SNDATLQIIT (61 aa)). Residues 242 to 533 (DHRKIGKQLD…LIEHYAGVFP (292 aa)) form a catalytic region. 3 residues coordinate Zn(2+): cysteine 333, histidine 384, and histidine 510.

This sequence belongs to the class-II aminoacyl-tRNA synthetase family. Homodimer. Requires Zn(2+) as cofactor.

The protein localises to the cytoplasm. It carries out the reaction tRNA(Thr) + L-threonine + ATP = L-threonyl-tRNA(Thr) + AMP + diphosphate + H(+). In terms of biological role, catalyzes the attachment of threonine to tRNA(Thr) in a two-step reaction: L-threonine is first activated by ATP to form Thr-AMP and then transferred to the acceptor end of tRNA(Thr). Also edits incorrectly charged L-seryl-tRNA(Thr). The chain is Threonine--tRNA ligase from Pseudomonas putida (strain GB-1).